The primary structure comprises 100 residues: Conantokin-G (100 aa).

The first 21 residues, 1-21, serve as a signal peptide directing secretion; it reads MHLYTYLYLLVPLVTFHLILG. A propeptide spanning residues 22–80 is cleaved from the precursor; the sequence is TGTLDDGGALTERRSADATALKAEPVLLQKSAARSTDDNGKDRLTQMKRILKQRGNKAR. Residues 52–100 form a disordered region; that stretch reads SAARSTDDNGKDRLTQMKRILKQRGNKARGEEELQENQELIREKSNGKR. Residues 56 to 66 show a composition bias toward basic and acidic residues; the sequence is STDDNGKDRLT. The interval 61–80 is gamma-carboxylation recognition sequence that plays a role in the conversion of Glu to carboxy-Glu (Gla); the sequence is GKDRLTQMKRILKQRGNKAR. E83 lines the a divalent metal cation pocket. Residues E83, E84, E87, E90, and E94 each carry the 4-carboxyglutamate modification. Positions 87, 90, and 94 each coordinate a divalent metal cation. Over residues 90–100 the composition is skewed to basic and acidic residues; the sequence is ELIREKSNGKR. N97 carries the asparagine amide modification.

Belongs to the conotoxin B superfamily. The cofactor is Ca(2+). Mg(2+) serves as cofactor. Expressed by the venom duct.

The protein resides in the secreted. Functionally, conantokins inhibit N-methyl-D-aspartate (NMDA) receptors. This toxin is selective for the NR2B/GRIN2B subunit. Induces sleep-like symptoms in young mice and hyperactivity in older mice. This is Conantokin-G from Conus geographus (Geography cone).